Here is a 52-residue protein sequence, read N- to C-terminus: Lysis protein for colicin N (52 aa).

A signal peptide spans 1-17; sequence MCGKILLILFFIMTLSA. Residue Cys18 is the site of N-palmitoyl cysteine attachment. Cys18 carries S-diacylglycerol cysteine lipidation.

The protein localises to the cell outer membrane. Lysis proteins are required for both colicin release and partial cell lysis. The sequence is that of Lysis protein for colicin N (cnl) from Escherichia coli.